A 477-amino-acid chain; its full sequence is Ribulose bisphosphate carboxylase large chain (477 aa).

The propeptide occupies 1–2; it reads MS. Pro-3 is subject to N-acetylproline. Lys-14 is subject to N6,N6,N6-trimethyllysine. The substrate site is built by Asn-123 and Thr-173. Lys-175 acts as the Proton acceptor in catalysis. Lys-177 provides a ligand contact to substrate. Residues Lys-201, Asp-203, and Glu-204 each contribute to the Mg(2+) site. Lys-201 is modified (N6-carboxylysine). The Proton acceptor role is filled by His-294. 3 residues coordinate substrate: Arg-295, His-327, and Ser-379.

It belongs to the RuBisCO large chain family. Type I subfamily. As to quaternary structure, heterohexadecamer of 8 large chains and 8 small chains; disulfide-linked. The disulfide link is formed within the large subunit homodimers. The cofactor is Mg(2+). The disulfide bond which can form in the large chain dimeric partners within the hexadecamer appears to be associated with oxidative stress and protein turnover.

It localises to the plastid. It is found in the chloroplast. The catalysed reaction is 2 (2R)-3-phosphoglycerate + 2 H(+) = D-ribulose 1,5-bisphosphate + CO2 + H2O. It catalyses the reaction D-ribulose 1,5-bisphosphate + O2 = 2-phosphoglycolate + (2R)-3-phosphoglycerate + 2 H(+). Its function is as follows. RuBisCO catalyzes two reactions: the carboxylation of D-ribulose 1,5-bisphosphate, the primary event in carbon dioxide fixation, as well as the oxidative fragmentation of the pentose substrate in the photorespiration process. Both reactions occur simultaneously and in competition at the same active site. This is Ribulose bisphosphate carboxylase large chain from Nicotiana otophora (Tobacco).